The following is a 139-amino-acid chain: Large ribosomal subunit protein uL16 (139 aa).

It belongs to the universal ribosomal protein uL16 family. In terms of assembly, part of the 50S ribosomal subunit.

Its function is as follows. Binds 23S rRNA and is also seen to make contacts with the A and possibly P site tRNAs. The sequence is that of Large ribosomal subunit protein uL16 from Mycoplasma pneumoniae (strain ATCC 29342 / M129 / Subtype 1) (Mycoplasmoides pneumoniae).